The primary structure comprises 163 residues: Small ribosomal subunit protein uS5 (163 aa).

One can recognise an S5 DRBM domain in the interval leucine 8–valine 71.

The protein belongs to the universal ribosomal protein uS5 family. In terms of assembly, part of the 30S ribosomal subunit. Contacts proteins S4 and S8.

With S4 and S12 plays an important role in translational accuracy. In terms of biological role, located at the back of the 30S subunit body where it stabilizes the conformation of the head with respect to the body. The chain is Small ribosomal subunit protein uS5 from Oleidesulfovibrio alaskensis (strain ATCC BAA-1058 / DSM 17464 / G20) (Desulfovibrio alaskensis).